A 132-amino-acid chain; its full sequence is Agouti-signaling protein (132 aa).

The signal sequence occupies residues 1–22 (MDVTRLLLATLLVFLCFFTAYS). The N-linked (GlcNAc...) asparagine glycan is linked to asparagine 39. A disordered region spans residues 62–88 (ISRKEAEKKRSSKKEASMKKVARPRTP). Positions 63 to 79 (SRKEAEKKRSSKKEASM) are enriched in basic and acidic residues. 5 cysteine pairs are disulfide-bonded: cysteine 93-cysteine 108, cysteine 100-cysteine 114, cysteine 107-cysteine 125, cysteine 111-cysteine 132, and cysteine 116-cysteine 123. Residues 93–132 (CVATRDSCKPPAPACCDPCASCQCRFFRSACSCRVLSLNC) form the Agouti domain.

The protein resides in the secreted. Involved in the regulation of melanogenesis. The binding of ASP to MC1R precludes alpha-MSH initiated signaling and thus blocks production of cAMP, leading to a down-regulation of eumelanogenesis (brown/black pigment) and thus increasing synthesis of pheomelanin (yellow/red pigment). The polypeptide is Agouti-signaling protein (ASIP) (Chlorocebus aethiops (Green monkey)).